The chain runs to 324 residues: Beta-ketoacyl-[acyl-carrier-protein] synthase III (324 aa).

Residues Cys-112 and His-249 contribute to the active site. Positions 250-254 (QANRR) are ACP-binding. Residue Asn-279 is part of the active site.

The protein belongs to the thiolase-like superfamily. FabH family. Homodimer.

The protein resides in the cytoplasm. The catalysed reaction is malonyl-[ACP] + acetyl-CoA + H(+) = 3-oxobutanoyl-[ACP] + CO2 + CoA. The protein operates within lipid metabolism; fatty acid biosynthesis. Catalyzes the condensation reaction of fatty acid synthesis by the addition to an acyl acceptor of two carbons from malonyl-ACP. Catalyzes the first condensation reaction which initiates fatty acid synthesis and may therefore play a role in governing the total rate of fatty acid production. Possesses both acetoacetyl-ACP synthase and acetyl transacylase activities. Its substrate specificity determines the biosynthesis of branched-chain and/or straight-chain of fatty acids. This chain is Beta-ketoacyl-[acyl-carrier-protein] synthase III, found in Streptococcus equi subsp. zooepidemicus (strain H70).